A 145-amino-acid chain; its full sequence is Large ribosomal subunit protein bL9 (145 aa).

It belongs to the bacterial ribosomal protein bL9 family.

Its function is as follows. Binds to the 23S rRNA. The chain is Large ribosomal subunit protein bL9 from Mesomycoplasma hyopneumoniae (strain J / ATCC 25934 / NCTC 10110) (Mycoplasma hyopneumoniae).